We begin with the raw amino-acid sequence, 190 residues long: Xanthine phosphoribosyltransferase 1 (190 aa).

Xanthine is bound by residues leucine 20 and asparagine 27. 128–132 (ANGEA) is a binding site for 5-phospho-alpha-D-ribose 1-diphosphate. Xanthine is bound at residue lysine 156.

This sequence belongs to the purine/pyrimidine phosphoribosyltransferase family. Xpt subfamily. In terms of assembly, homodimer.

The protein localises to the cytoplasm. The catalysed reaction is XMP + diphosphate = xanthine + 5-phospho-alpha-D-ribose 1-diphosphate. The protein operates within purine metabolism; XMP biosynthesis via salvage pathway; XMP from xanthine: step 1/1. Converts the preformed base xanthine, a product of nucleic acid breakdown, to xanthosine 5'-monophosphate (XMP), so it can be reused for RNA or DNA synthesis. The chain is Xanthine phosphoribosyltransferase 1 from Clostridium botulinum (strain ATCC 19397 / Type A).